The primary structure comprises 948 residues: Valine--tRNA ligase (948 aa).

The 'HIGH' region motif lies at 40–50; that stretch reads PNVTGSLHMGH. The short motif at 551 to 555 is the 'KMSKS' region element; it reads KMSKS. Residue lysine 554 coordinates ATP. The stretch at 879–945 forms a coiled coil; it reads LIDKGAELAR…GKLAEQHARI (67 aa).

Belongs to the class-I aminoacyl-tRNA synthetase family. ValS type 1 subfamily. Monomer.

It is found in the cytoplasm. It carries out the reaction tRNA(Val) + L-valine + ATP = L-valyl-tRNA(Val) + AMP + diphosphate. Catalyzes the attachment of valine to tRNA(Val). As ValRS can inadvertently accommodate and process structurally similar amino acids such as threonine, to avoid such errors, it has a 'posttransfer' editing activity that hydrolyzes mischarged Thr-tRNA(Val) in a tRNA-dependent manner. This is Valine--tRNA ligase from Pseudomonas syringae pv. syringae (strain B728a).